The following is a 77-amino-acid chain: NADH-ubiquinone oxidoreductase chain 4L (77 aa).

2 helical membrane-spanning segments follow: residues 15–37 and 44–64; these read WQRL…LKFS and MFFY…VVMV.

Belongs to the complex I subunit 4L family.

It localises to the mitochondrion membrane. It carries out the reaction a ubiquinone + NADH + 5 H(+)(in) = a ubiquinol + NAD(+) + 4 H(+)(out). Functionally, core subunit of the mitochondrial membrane respiratory chain NADH dehydrogenase (Complex I) that is believed to belong to the minimal assembly required for catalysis. Complex I functions in the transfer of electrons from NADH to the respiratory chain. The immediate electron acceptor for the enzyme is believed to be ubiquinone. The chain is NADH-ubiquinone oxidoreductase chain 4L from Caenorhabditis elegans.